A 262-amino-acid polypeptide reads, in one-letter code: tRNA 4-demethylwyosine(37)-methyltransferase Taw21 (262 aa).

S-adenosyl-L-methionine is bound by residues His-108, Phe-125, 148 to 149, and 175 to 176; these read DL and DA.

Belongs to the class I-like SAM-binding methyltransferase superfamily. TRM5/TYW2 family.

It is found in the cytoplasm. It catalyses the reaction 4-demethylwyosine(37) in tRNA(Phe) + S-adenosyl-L-methionine = isowyosine(37) in tRNA(Phe) + S-adenosyl-L-homocysteine + H(+). Catalyzes the C7-methylation of 4-demethylwyosine (imG-14) at position 37 in tRNA(Phe). The chain is tRNA 4-demethylwyosine(37)-methyltransferase Taw21 from Saccharolobus solfataricus (strain ATCC 35092 / DSM 1617 / JCM 11322 / P2) (Sulfolobus solfataricus).